The following is a 237-amino-acid chain: Phosphoribosylaminoimidazole-succinocarboxamide synthase (237 aa).

This sequence belongs to the SAICAR synthetase family.

The catalysed reaction is 5-amino-1-(5-phospho-D-ribosyl)imidazole-4-carboxylate + L-aspartate + ATP = (2S)-2-[5-amino-1-(5-phospho-beta-D-ribosyl)imidazole-4-carboxamido]succinate + ADP + phosphate + 2 H(+). Its pathway is purine metabolism; IMP biosynthesis via de novo pathway; 5-amino-1-(5-phospho-D-ribosyl)imidazole-4-carboxamide from 5-amino-1-(5-phospho-D-ribosyl)imidazole-4-carboxylate: step 1/2. The protein is Phosphoribosylaminoimidazole-succinocarboxamide synthase of Shigella boydii serotype 4 (strain Sb227).